The following is a 365-amino-acid chain: Probable 7-methylxanthine methyltransferase PCS2 (365 aa).

S-adenosyl-L-homocysteine is bound at residue Tyr19. A theobromine-binding site is contributed by Thr26. Residues Cys62, Asp99, Leu100, Ser134, and Phe135 each coordinate S-adenosyl-L-homocysteine. Theobromine contacts are provided by Tyr152, His155, and Trp156. Asn173 contacts Mg(2+). Arg221 serves as a coordination point for theobromine. Positions 259, 261, and 262 each coordinate Mg(2+).

Belongs to the methyltransferase superfamily. Type-7 methyltransferase family. Mg(2+) serves as cofactor.

It carries out the reaction 7-methylxanthine + S-adenosyl-L-methionine = theobromine + S-adenosyl-L-homocysteine + H(+). Functionally, no detectable N-methyltransferase activity. The sequence is that of Probable 7-methylxanthine methyltransferase PCS2 from Camellia ptilophylla (Cocoa tea).